The primary structure comprises 167 residues: Small ribosomal subunit protein uS3m (167 aa).

A mitochondrion-targeting transit peptide spans M1–F35.

It belongs to the universal ribosomal protein uS3 family. Component of the mitochondrial ribosome small subunit (28S) which comprises a 12S rRNA and about 30 distinct proteins.

It localises to the mitochondrion. The polypeptide is Small ribosomal subunit protein uS3m (MRPS24) (Bos taurus (Bovine)).